The chain runs to 591 residues: Parathyroid hormone/parathyroid hormone-related peptide receptor (591 aa).

The N-terminal stretch at Met1–Val26 is a signal peptide. At Asp27–Gly188 the chain is on the extracellular side. 3 disulfide bridges follow: Cys48/Cys117, Cys108/Cys148, and Cys131/Cys170. Positions Lys67–Arg104 are disordered. The segment covering Glu81–Asp96 has biased composition (basic and acidic residues). Residues Asn151, Asn161, Asn166, and Asn176 are each glycosylated (N-linked (GlcNAc...) asparagine). The chain crosses the membrane as a helical span at residues Met189–Phe212. Over Arg213 to Arg219 the chain is Cytoplasmic. A helical membrane pass occupies residues Asn220–Val239. Over Lys240–Arg282 the chain is Extracellular. A helical membrane pass occupies residues Val283–Leu306. Over His307–Tyr320 the chain is Cytoplasmic. The chain crosses the membrane as a helical span at residues Leu321–Val342. Residues Arg343–Trp361 lie on the Extracellular side of the membrane. A helical membrane pass occupies residues Ile362–Ile382. At Arg383 to Ser409 the chain is on the cytoplasmic side. The helical transmembrane segment at Thr410–Pro428 threads the bilayer. Topologically, residues Tyr429–Gln440 are extracellular. Residues Met441 to Asn463 traverse the membrane as a helical segment. Topologically, residues Gly464–Met591 are cytoplasmic. An Important for interaction with G proteins motif is present at residues Trp474–Trp477.

The protein belongs to the G-protein coupled receptor 2 family. Homodimer in the absence of bound ligand. Peptide hormone binding leads to dissociation of the homodimer. Post-translationally, N-glycosylated. As to expression, detected in kidney.

Its subcellular location is the cell membrane. Its function is as follows. G-protein-coupled receptor for parathyroid hormone (PTH) and for parathyroid hormone-related peptide (PTHLH). Ligand binding causes a conformation change that triggers signaling via guanine nucleotide-binding proteins (G proteins) and modulates the activity of downstream effectors, such as adenylate cyclase (cAMP). PTH1R is coupled to G(s) G alpha proteins and mediates activation of adenylate cyclase activity. PTHLH dissociates from PTH1R more rapidly than PTH; as consequence, the cAMP response induced by PTHLH decays faster than the response induced by PTH. This chain is Parathyroid hormone/parathyroid hormone-related peptide receptor (Pth1r), found in Mus musculus (Mouse).